Here is a 151-residue protein sequence, read N- to C-terminus: UPF0208 membrane protein SG1605 (151 aa).

2 helical membrane-spanning segments follow: residues 46–64 and 70–90; these read FGVR…WQIA and GPAV…LWWL.

The protein belongs to the UPF0208 family.

It is found in the cell inner membrane. This Sodalis glossinidius (strain morsitans) protein is UPF0208 membrane protein SG1605.